The primary structure comprises 276 residues: Large ribosomal subunit protein uL2 (276 aa).

The tract at residues 223–276 (GVAMNPVDHPHGGGEGRGKGHHPTSPWGLPTKGYKTRRGKRPSDKFIVRRRNEV) is disordered. 2 stretches are compositionally biased toward basic and acidic residues: residues 230 to 240 (DHPHGGGEGRG) and 263 to 276 (RPSD…RNEV).

The protein belongs to the universal ribosomal protein uL2 family. As to quaternary structure, part of the 50S ribosomal subunit. Forms a bridge to the 30S subunit in the 70S ribosome.

In terms of biological role, one of the primary rRNA binding proteins. Required for association of the 30S and 50S subunits to form the 70S ribosome, for tRNA binding and peptide bond formation. It has been suggested to have peptidyltransferase activity; this is somewhat controversial. Makes several contacts with the 16S rRNA in the 70S ribosome. This Thermotoga maritima (strain ATCC 43589 / DSM 3109 / JCM 10099 / NBRC 100826 / MSB8) protein is Large ribosomal subunit protein uL2.